The sequence spans 450 residues: Phosphoglucosamine mutase (450 aa).

The active-site Phosphoserine intermediate is the S101. Mg(2+)-binding residues include S101, D240, D242, and D244. S101 carries the post-translational modification Phosphoserine.

The protein belongs to the phosphohexose mutase family. Mg(2+) serves as cofactor. In terms of processing, activated by phosphorylation.

It carries out the reaction alpha-D-glucosamine 1-phosphate = D-glucosamine 6-phosphate. Its function is as follows. Catalyzes the conversion of glucosamine-6-phosphate to glucosamine-1-phosphate. The protein is Phosphoglucosamine mutase of Streptococcus pneumoniae serotype 19F (strain G54).